The sequence spans 317 residues: Glycine--tRNA ligase alpha subunit (317 aa).

It belongs to the class-II aminoacyl-tRNA synthetase family. Tetramer of two alpha and two beta subunits.

It is found in the cytoplasm. The catalysed reaction is tRNA(Gly) + glycine + ATP = glycyl-tRNA(Gly) + AMP + diphosphate. In Cupriavidus metallidurans (strain ATCC 43123 / DSM 2839 / NBRC 102507 / CH34) (Ralstonia metallidurans), this protein is Glycine--tRNA ligase alpha subunit.